The primary structure comprises 496 residues: Probable cytosol aminopeptidase (496 aa).

Residues lysine 261 and aspartate 266 each contribute to the Mn(2+) site. Lysine 273 is an active-site residue. 3 residues coordinate Mn(2+): aspartate 284, aspartate 343, and glutamate 345. The active site involves arginine 347.

The protein belongs to the peptidase M17 family. Requires Mn(2+) as cofactor.

The protein resides in the cytoplasm. It carries out the reaction Release of an N-terminal amino acid, Xaa-|-Yaa-, in which Xaa is preferably Leu, but may be other amino acids including Pro although not Arg or Lys, and Yaa may be Pro. Amino acid amides and methyl esters are also readily hydrolyzed, but rates on arylamides are exceedingly low.. It catalyses the reaction Release of an N-terminal amino acid, preferentially leucine, but not glutamic or aspartic acids.. Its function is as follows. Presumably involved in the processing and regular turnover of intracellular proteins. Catalyzes the removal of unsubstituted N-terminal amino acids from various peptides. This Bacillus pumilus (strain SAFR-032) protein is Probable cytosol aminopeptidase.